A 264-amino-acid polypeptide reads, in one-letter code: NADH dehydrogenase [ubiquinone] iron-sulfur protein 3, mitochondrial (264 aa).

The N-terminal 36 residues, 1–36, are a transit peptide targeting the mitochondrion; the sequence is MAAAAVARLWWRGILGASALTRGTGRPSVLLLPVRR.

This sequence belongs to the complex I 30 kDa subunit family. Core subunit of respiratory chain NADH dehydrogenase (Complex I) which is composed of 45 different subunits. Interacts with NDUFAF3. Interacts with RAB5IF. Found in subcomplexes containing subunits NDUFS2, MT-ND1 and NDUFA13.

It localises to the mitochondrion inner membrane. The catalysed reaction is a ubiquinone + NADH + 5 H(+)(in) = a ubiquinol + NAD(+) + 4 H(+)(out). Core subunit of the mitochondrial membrane respiratory chain NADH dehydrogenase (Complex I) which catalyzes electron transfer from NADH through the respiratory chain, using ubiquinone as an electron acceptor. Essential for the catalytic activity and assembly of complex I. The protein is NADH dehydrogenase [ubiquinone] iron-sulfur protein 3, mitochondrial (NDUFS3) of Homo sapiens (Human).